The chain runs to 506 residues: 2-isopropylmalate synthase (506 aa).

Residues 4 to 266 (ILFMDTTLRD…EPSITLKEIK (263 aa)) form the Pyruvate carboxyltransferase domain. 4 residues coordinate Mn(2+): Asp-13, His-201, His-203, and Asn-237. A regulatory domain region spans residues 390–506 (NITQLQVHFV…KLKSFIQLVK (117 aa)).

Belongs to the alpha-IPM synthase/homocitrate synthase family. LeuA type 1 subfamily. In terms of assembly, homodimer. The cofactor is Mn(2+).

It is found in the cytoplasm. It carries out the reaction 3-methyl-2-oxobutanoate + acetyl-CoA + H2O = (2S)-2-isopropylmalate + CoA + H(+). The protein operates within amino-acid biosynthesis; L-leucine biosynthesis; L-leucine from 3-methyl-2-oxobutanoate: step 1/4. Functionally, catalyzes the condensation of the acetyl group of acetyl-CoA with 3-methyl-2-oxobutanoate (2-ketoisovalerate) to form 3-carboxy-3-hydroxy-4-methylpentanoate (2-isopropylmalate). This Bacillus thuringiensis subsp. konkukian (strain 97-27) protein is 2-isopropylmalate synthase.